Consider the following 394-residue polypeptide: Fructose-bisphosphate aldolase, chloroplastic (394 aa).

The N-terminal 46 residues, 1–46 (MASASLLKTSPVLDNPEFLKGQTLRIPSVAGVRFTPSGSSSLTVRA), are a transit peptide targeting the chloroplast. The substrate site is built by Arg-93 and Lys-183. Glu-223 (proton acceptor) is an active-site residue. The Schiff-base intermediate with dihydroxyacetone-P role is filled by Lys-265.

It belongs to the class I fructose-bisphosphate aldolase family.

The protein resides in the plastid. It is found in the chloroplast. The enzyme catalyses beta-D-fructose 1,6-bisphosphate = D-glyceraldehyde 3-phosphate + dihydroxyacetone phosphate. Its pathway is carbohydrate degradation; glycolysis; D-glyceraldehyde 3-phosphate and glycerone phosphate from D-glucose: step 4/4. This Spinacia oleracea (Spinach) protein is Fructose-bisphosphate aldolase, chloroplastic.